The sequence spans 348 residues: E3 ubiquitin-protein ligase MARCHF9 (348 aa).

Residues 48–96 (ARDGDGDEEEYYGSEPRARGLAGDKEPRAGPPPPPAPPPPPPGALDALS) form a disordered region. A compositionally biased stretch (basic and acidic residues) spans 63-75 (PRARGLAGDKEPR). Pro residues predominate over residues 76 to 90 (AGPPPPPAPPPPPPG). The RING-CH-type zinc finger occupies 102–162 (DSGLRTPQCR…ELCYFKYQVL (61 aa)). Zn(2+) is bound by residues cysteine 110, cysteine 113, cysteine 126, cysteine 128, histidine 136, cysteine 139, cysteine 152, and cysteine 155. The next 2 membrane-spanning stretches (helical) occupy residues 185–205 (IAAI…LIWS) and 219–239 (LFQI…GLIV). Disordered regions lie at residues 272-304 (GDTG…AAQR) and 328-348 (PPDA…VTTV).

Homodimer.

It localises to the golgi apparatus membrane. The protein resides in the lysosome membrane. It catalyses the reaction S-ubiquitinyl-[E2 ubiquitin-conjugating enzyme]-L-cysteine + [acceptor protein]-L-lysine = [E2 ubiquitin-conjugating enzyme]-L-cysteine + N(6)-ubiquitinyl-[acceptor protein]-L-lysine.. The protein operates within protein modification; protein ubiquitination. Its function is as follows. E3 ubiquitin-protein ligase that may mediate ubiquitination of MHC-I, CD4 and ICAM1, and promote their subsequent endocytosis and sorting to lysosomes via multivesicular bodies. E3 ubiquitin ligases accept ubiquitin from an E2 ubiquitin-conjugating enzyme in the form of a thioester and then directly transfer the ubiquitin to targeted substrates. This chain is E3 ubiquitin-protein ligase MARCHF9 (Marchf9), found in Mus musculus (Mouse).